Reading from the N-terminus, the 896-residue chain is Phycobiliprotein ApcE (896 aa).

Cysteine 190 contributes to the (2R,3E)-phycocyanobilin binding site. 3 PBS-linker domains span residues 247–427, 508–684, and 703–881; these read DIQG…FRKV, LGAK…QRVD, and EPEI…KQDK.

It belongs to the phycobilisome linker protein family. In terms of assembly, heterodimer of ApcF (a variant beta-allophycocyanin). Phycobilisomes of this organism are composed of a two cylinder core, from which six rods radiate. The core is mainly composed of allophycocyanin alpha and beta chains and of minor components. In terms of processing, contains one covalently linked bilin chromophore. This protein autochromophorylates.

It localises to the cellular thylakoid membrane. In terms of biological role, this protein is postulated to act both as terminal energy acceptor (by its phycobilin-like domains) and as a linker polypeptide (by its repeats and arms) that stabilizes the phycobilisome core architecture. Has intrinsic bilin lyase activity. This chain is Phycobiliprotein ApcE (apcE), found in Synechocystis sp. (strain ATCC 27184 / PCC 6803 / Kazusa).